The chain runs to 435 residues: Adenylosuccinate synthetase (435 aa).

GTP-binding positions include 17 to 23 and 47 to 49; these read GDEGKGK and GHT. Residue Asp18 is the Proton acceptor of the active site. Mg(2+) is bound by residues Asp18 and Gly47. Residues 18 to 21, 45 to 48, Thr138, Arg152, Asn232, Thr247, and Arg311 each bind IMP; these read DEGK and NAGH. Residue His48 is the Proton donor of the active site. Residue 307–313 coordinates substrate; sequence VTTGRKR. GTP-binding positions include Arg313, 339 to 341, and 421 to 423; these read KLD and GVG.

It belongs to the adenylosuccinate synthetase family. Homodimer. Mg(2+) serves as cofactor.

It localises to the cytoplasm. The enzyme catalyses IMP + L-aspartate + GTP = N(6)-(1,2-dicarboxyethyl)-AMP + GDP + phosphate + 2 H(+). Its pathway is purine metabolism; AMP biosynthesis via de novo pathway; AMP from IMP: step 1/2. Functionally, plays an important role in the de novo pathway and in the salvage pathway of purine nucleotide biosynthesis. Catalyzes the first committed step in the biosynthesis of AMP from IMP. In Caenorhabditis briggsae, this protein is Adenylosuccinate synthetase.